Here is a 314-residue protein sequence, read N- to C-terminus: Methionyl-tRNA formyltransferase (314 aa).

112–115 is a (6S)-5,6,7,8-tetrahydrofolate binding site; that stretch reads SLLP.

It belongs to the Fmt family.

The enzyme catalyses L-methionyl-tRNA(fMet) + (6R)-10-formyltetrahydrofolate = N-formyl-L-methionyl-tRNA(fMet) + (6S)-5,6,7,8-tetrahydrofolate + H(+). Its function is as follows. Attaches a formyl group to the free amino group of methionyl-tRNA(fMet). The formyl group appears to play a dual role in the initiator identity of N-formylmethionyl-tRNA by promoting its recognition by IF2 and preventing the misappropriation of this tRNA by the elongation apparatus. The protein is Methionyl-tRNA formyltransferase of Buchnera aphidicola subsp. Schizaphis graminum (strain Sg).